The chain runs to 490 residues: Betaine aldehyde dehydrogenase (490 aa).

Isoleucine 27 and aspartate 93 together coordinate K(+). NAD(+) is bound at residue 150–152 (GAW). Lysine 162 serves as the catalytic Charge relay system. 176-179 (KPSE) provides a ligand contact to NAD(+). Valine 180 serves as a coordination point for K(+). NAD(+) is bound at residue 230 to 233 (GTTT). A K(+)-binding site is contributed by leucine 246. Glutamate 252 (proton acceptor) is an active-site residue. NAD(+) contacts are provided by glycine 254, cysteine 286, and glutamate 387. The Nucleophile role is filled by cysteine 286. At cysteine 286 the chain carries Cysteine sulfenic acid (-SOH). Residues lysine 457 and glycine 460 each coordinate K(+). Residue glutamate 464 is the Charge relay system of the active site.

Belongs to the aldehyde dehydrogenase family. As to quaternary structure, dimer of dimers. The cofactor is K(+).

It carries out the reaction betaine aldehyde + NAD(+) + H2O = glycine betaine + NADH + 2 H(+). It participates in amine and polyamine biosynthesis; betaine biosynthesis via choline pathway; betaine from betaine aldehyde: step 1/1. In terms of biological role, involved in the biosynthesis of the osmoprotectant glycine betaine. Catalyzes the irreversible oxidation of betaine aldehyde to the corresponding acid. This is Betaine aldehyde dehydrogenase from Pseudomonas entomophila (strain L48).